The sequence spans 516 residues: Alstonine synthase (516 aa).

Residues 6 to 26 (NFSLTSPIFLLLSSLFLIILL) traverse the membrane as a helical segment. Cys-453 contributes to the heme binding site.

It belongs to the cytochrome P450 family. It depends on heme as a cofactor. In terms of tissue distribution, highly expressed in stems. Expressed at low levels in roots.

The protein localises to the endoplasmic reticulum membrane. It carries out the reaction tetrahydroalstonine + A + reduced [NADPH--hemoprotein reductase] + O2 = alstonine + AH2 + oxidized [NADPH--hemoprotein reductase] + 2 H2O + H(+). It catalyses the reaction ajmalicine + A + reduced [NADPH--hemoprotein reductase] + O2 = serpentine + AH2 + oxidized [NADPH--hemoprotein reductase] + 2 H2O + H(+). Its pathway is alkaloid biosynthesis. Involved in monoterpene indole alkaloids (MIAs) biosynthesis. Converts by aromatization the tetrahydro-beta-carboline alkaloids tetrahydroalstonine and ajmalicine to the corresponding beta-carboline alkaloids alstonine and serpentine, respectively. The protein is Alstonine synthase of Catharanthus roseus (Madagascar periwinkle).